Here is a 90-residue protein sequence, read N- to C-terminus: Probable Fe(2+)-trafficking protein (90 aa).

The protein belongs to the Fe(2+)-trafficking protein family.

Functionally, could be a mediator in iron transactions between iron acquisition and iron-requiring processes, such as synthesis and/or repair of Fe-S clusters in biosynthetic enzymes. This is Probable Fe(2+)-trafficking protein from Pseudomonas putida (strain W619).